A 301-amino-acid chain; its full sequence is uncharacterized protein (301 aa).

The Extracellular segment spans residues 1 to 5 (MSYKK). Residues 6-26 (FVYFINLFFLLGATLLTFFLI) form a helical membrane-spanning segment. Residues 27 to 112 (LAGGRTTGVL…NRNAYYYLSR (86 aa)) lie on the Cytoplasmic side of the membrane. A helical transmembrane segment spans residues 113–133 (VGWAMLLIGLFFLLITLVSVI). Residues 134–143 (ASLIRYNRRT) are Extracellular-facing. The chain crosses the membrane as a helical span at residues 144-164 (AALATAMSWITLFFITLSACL). Residues 165-191 (YTGCYAKAVKAFHHENRDARLGPKNFG) are Cytoplasmic-facing. The chain crosses the membrane as a helical span at residues 192-212 (LIWTTVFLLIVNAICCTIMVA). At 213-301 (THKRNEYIYD…YTEQNVPVVS (89 aa)) the chain is on the extracellular side. The interval 254–301 (VQQSQSHQNHRFFKKLRTKKRTVTSAGDEPDRVQEERVYTEQNVPVVS) is disordered. Positions 261–275 (QNHRFFKKLRTKKRT) are enriched in basic residues. Residues 282 to 292 (EPDRVQEERVY) show a composition bias toward basic and acidic residues.

This sequence belongs to the SUR7 family.

It is found in the cell membrane. Functionally, involved in sporulation and affects the sphingolipid composition of the plasma membrane. This is an uncharacterized protein from Saccharomyces cerevisiae (strain ATCC 204508 / S288c) (Baker's yeast).